Consider the following 555-residue polypeptide: MSLNTDDSGRIRTRQRAKRACETCKLRKRKCDGHEPCTYCLRYEYQCTFKPHPRRKPAASKSSARPSEEEDSPKFLDRVDANQEHMEANSGTAFPHLLGMRLNPQGAPKVYGFSWNLGPRDEPLEPFTNLTDLISREEMEDLASHYLKKIHPVYAVLDPDTLRQKIVARWHDPATAASYDPILCGVAALGSLYSGHQEHPKEGALVQSAKEMLETTRISKTTLLHHATAWILRTIYLRSTNCPHASWMASCSTMHIIEAIGAHQDPELVSLVYSDTADVSVNDESQRRLFWVATVLNSWISYEYGRSRVILRGVSCKPPLPRTGDFTTDLISMYQISERLDPDQNNKLSDLEDALSRVERLTLSHDALILSQSNLALTIYRRLRVASSNISNDILTRIIRLGNDGLEAAVRLAEDRSPWWHVANIPFQFLCILLAIDTRESLSYVGPALRSFRAITRHYSTPTLHTALETIESLVRLSQNKKERDLTLLRDSMQQEDPGLTEQGSTTSQAFNDASWLGATGDLTLPDNFDWDWNVFLDTQVPFFDEGEAGGQRYR.

Residues 21-47 (CETCKLRKRKCDGHEPCTYCLRYEYQC) constitute a DNA-binding region (zn(2)-C6 fungal-type). The disordered stretch occupies residues 51–73 (PHPRRKPAASKSSARPSEEEDSP).

It localises to the nucleus. Transcription factor that regulates the gene cluster that mediates the biosynthesis of 5-hydroxy-2-hydroxymethyl-1,4-pyrone, also know as kojic acid, a by-product in the fermentation process of malting rice that acts as a chelation agent. Negatively regulates the expression of the kojic acid-related protein kap1. Improves the antioxidant capacity via the accumulation of kojic acid that is also a strong oxidant. The protein is Transcription factor kojR of Aspergillus oryzae (strain ATCC 42149 / RIB 40) (Yellow koji mold).